The chain runs to 149 residues: Arginine repressor (149 aa).

This sequence belongs to the ArgR family.

It localises to the cytoplasm. Its pathway is amino-acid biosynthesis; L-arginine biosynthesis [regulation]. Functionally, regulates arginine biosynthesis genes. The protein is Arginine repressor of Alkaliphilus metalliredigens (strain QYMF).